Here is a 321-residue protein sequence, read N- to C-terminus: MKRKKIALIGSGMIGGTLAHMIGLKELGDIVLFDVAEGLPQGKALDIAESSPVDGFDINLTGANAYEAIEGADVIIVTAGVARKPGMSRDDLLGINLKVMEQVGAGIKKYAPSAFVICITNPLDAMVWALQKFSGLPAQKVVGMAGVLDSARFRYFLSQEFNISIKDITAFVLGGHGDSMVPLVRYSTVSGIPLPDLVKMGWTTHEKIDQIVQRTRDGGAEIVSLLKTGSAFYAPASSAVAMAEAYLKDTRRVLPVAARLSGEYGIKDMYVGVPVVIGAGGVERVIEIDLNDNEKSAFEKSVNAVKELCKTCSALAPNLKE.

Residues 10–15 (GSGMIG) and Asp-34 each bind NAD(+). Arg-83 and Arg-89 together coordinate substrate. NAD(+)-binding positions include Asn-96 and 119–121 (ITN). Asn-121 and Arg-152 together coordinate substrate. Catalysis depends on His-176, which acts as the Proton acceptor.

This sequence belongs to the LDH/MDH superfamily. MDH type 3 family.

It carries out the reaction (S)-malate + NAD(+) = oxaloacetate + NADH + H(+). Functionally, catalyzes the reversible oxidation of malate to oxaloacetate. This is Malate dehydrogenase from Bartonella bacilliformis (strain ATCC 35685 / KC583 / Herrer 020/F12,63).